Here is a 1061-residue protein sequence, read N- to C-terminus: MAEVKKPFHEQVAERLIEQLKAGTAPWQKPWEPGMPGSFIPLNPTTGKRYKGINAIQLMAQGHADPRWMTYKQAAAAGAQVRRGEKGTPIQYWKFSEEQTKTDEQTGKPVLDANGDPVKVTVQLERPRVFFATVFNAEQIDGLPPLERKEQTWSAVERAEHILAASGATIRHGEHDRAFYRPSTDSIHLPDKGQFPSADNYYATALHELGHWTGHPSRLDRDLAHPFGSEGYAKEELRAEIASMILGDELGIGHDPGQHAAYVGSWIKALQEDPLEIFRAAADAEKIQDFVLAFEQKQIQEQTTQQAIEPAQGATMEQQQDQVARPAIAPADELIAQTLRMYRAGAEPAEGNQSLAALTETTLGFELPADWTGRVQVQANVEVEHDGERSVVPAGDREPEFWGVYANHAWGGHQWLADFAGPDAQTNAEALADRLAVIDAYATANEYEQAAKFARIHEERVRRDPNSTDEDRVAAKEARKAAEGTAMLHDEDLQRRIADYEREQQEMAQAMNAAEQPAAAQAPAKPERAYLNVPFKEKDEVKALGARWDRQERAWYVPAGVDPAPFAKWAREGATAAVEARAEAQPTQPTAERPNAAQERVYLAVPYGERQVAKAAGAQWDKVAKSWYAGPNADMGKLQRWLPDNVPTQQSPAVTPEDEFAEALKSMGCVVTPGGEHPIMDGKKHRIETEGDKKGEKSGFYVGHLDGHPAGYIKNNRTGVEMKWKAKGYALDPAEKAKMQAEAAAKLAARAEEQERQHEATAQRIGRQAQSLVPITEPTPYLRDKGLQVHAGVLTDQEGQKTYIPAYDADGKQWTMQYIQEDGTKRFAKDSRKEGCFHVVGGMDALAAAPALVIGEGYATAATVAEALGHATVAAFDSGNLQAVAEALHAKFPDKPVVIAGDDDRQVQITQGVNPGRTKAQEAAKAVGGKAIFPIFAPGENAYPKELPPITPENYRNHLHAEKRLADAAAGKVQLSEADTAKLKESLLNDGQLAALSNMKKHTDFNDLSERSSLGKDGVERQVRSAVGKVLLDEGQRQKVQQLKQQDIEQQEQRQRRARTY.

The region spanning 850–938 is the Toprim domain; sequence PALVIGEGYA…GKAIFPIFAP (89 aa). The segment at 1034 to 1061 is disordered; that stretch reads EGQRQKVQQLKQQDIEQQEQRQRRARTY.

Required for autonomous replication in E.coli. Transferred into the recipient cell during bacterial conjugation. Catalyzes the synthesis of short oligoribonucleotide primers with CpA or pCpA at their 5'-termini on a single-stranded template DNA. In Escherichia coli, this protein is DNA primase TraC (traC).